The following is a 955-amino-acid chain: Thyroid hormone receptor-associated protein 3 (955 aa).

Residues 1 to 94 (MSKTNKSKSG…YFRGRNRGFY (94 aa)) are disordered. Serine 2 carries the N-acetylserine modification. The required for mRNA splicing activation stretch occupies residues 2-190 (SKTNKSKSGS…KSSSKDSRPS (189 aa)). Over residues 14 to 51 (SRSRSASRSRSRSFSKSRSRSRSLSRSRKRRLSSRSRS) the composition is skewed to basic residues. Arginine 17 is subject to Dimethylated arginine. A compositionally biased stretch (basic and acidic residues) spans 58–75 (HNRERNHPRVYQNRDFRG). The residue at position 66 (arginine 66) is an Asymmetric dimethylarginine. The segment covering 82 to 94 (RPYYFRGRNRGFY) has biased composition (low complexity). An asymmetric dimethylarginine mark is found at arginine 101 and arginine 108. The disordered stretch occupies residues 117–559 (AYSPRRGRSR…AKGDFPTGKS (443 aa)). Over residues 121-143 (RRGRSRSRSPKRRSPSPRSRSHS) the composition is skewed to basic residues. Basic and acidic residues predominate over residues 144-155 (RNSDKSSSDRSR). Residues 157–166 (SSSSRSSSNH) show a composition bias toward low complexity. Positions 167-188 (SRVESSKRKSAKEKKSSSKDSR) are enriched in basic and acidic residues. Lysine 202 is covalently cross-linked (Glycyl lysine isopeptide (Lys-Gly) (interchain with G-Cter in SUMO1); alternate). Lysine 202 participates in a covalent cross-link: Glycyl lysine isopeptide (Lys-Gly) (interchain with G-Cter in SUMO2); alternate. Positions 204–220 (QTFSGGTSQDTKASESS) are enriched in polar residues. Lysine 215 is covalently cross-linked (Glycyl lysine isopeptide (Lys-Gly) (interchain with G-Cter in SUMO2)). Position 220 is a phosphoserine (serine 220). Lysine 221 participates in a covalent cross-link: Glycyl lysine isopeptide (Lys-Gly) (interchain with G-Cter in SUMO2); alternate. Lysine 221 is modified (N6-acetyllysine; alternate). Residues serine 232, serine 237, serine 240, serine 243, and serine 248 each carry the phosphoserine modification. Lysine 252 is covalently cross-linked (Glycyl lysine isopeptide (Lys-Gly) (interchain with G-Cter in SUMO2); alternate). Lysine 252 carries the N6-methyllysine; alternate modification. Serine 253 and serine 257 each carry phosphoserine. Over residues 266–276 (RPSPVPKPSPP) the composition is skewed to pro residues. The segment covering 282-300 (QMGSTLPSGAGYQSGTHQG) has biased composition (polar residues). Residues 305–331 (GSGSLSPSKKSPVGKSPPSTGSTYGSS) show a composition bias toward low complexity. Residues serine 315, serine 320, and serine 323 each carry the phosphoserine modification. Threonine 324 carries the phosphothreonine modification. Serine 326 is subject to Phosphoserine. Position 328 is a phosphotyrosine (tyrosine 328). Lysine 333 participates in a covalent cross-link: Glycyl lysine isopeptide (Lys-Gly) (interchain with G-Cter in SUMO2). Position 339 is a phosphoserine (serine 339). Lysine 346 participates in a covalent cross-link: Glycyl lysine isopeptide (Lys-Gly) (interchain with G-Cter in SUMO2); alternate. Lysine 346 is subject to N6-acetyllysine; alternate. Basic and acidic residues predominate over residues 347–377 (RYLEEQKTENGKDKEQKQTNTDKEKIKEKGS). Glycyl lysine isopeptide (Lys-Gly) (interchain with G-Cter in SUMO2) cross-links involve residues lysine 353 and lysine 375. The segment at 359 to 955 (DKEQKQTNTD…EKDNIQPTTE (597 aa)) is required for mRNA decay activity. Serine 377 and serine 379 each carry phosphoserine. Lysine 387 participates in a covalent cross-link: Glycyl lysine isopeptide (Lys-Gly) (interchain with G-Cter in SUMO1); alternate. A Glycyl lysine isopeptide (Lys-Gly) (interchain with G-Cter in SUMO2); alternate cross-link involves residue lysine 387. Glycyl lysine isopeptide (Lys-Gly) (interchain with G-Cter in SUMO2) cross-links involve residues lysine 389 and lysine 396. Threonine 397 bears the Phosphothreonine mark. Lysine 401 participates in a covalent cross-link: Glycyl lysine isopeptide (Lys-Gly) (interchain with G-Cter in SUMO2). Serine 406 and serine 408 each carry phosphoserine. A compositionally biased stretch (basic and acidic residues) spans 414–452 (LRDDFEKKMADFHKEEMDDQDKDKAKGRKESEFDDEPKF). Residues lysine 421 and lysine 427 each participate in a glycyl lysine isopeptide (Lys-Gly) (interchain with G-Cter in SUMO2) cross-link. At serine 444 the chain carries Phosphoserine. Lysine 451 is covalently cross-linked (Glycyl lysine isopeptide (Lys-Gly) (interchain with G-Cter in SUMO1); alternate). Glycyl lysine isopeptide (Lys-Gly) (interchain with G-Cter in SUMO2); alternate cross-links involve residues lysine 451 and lysine 455. An N6-acetyllysine; alternate modification is found at lysine 455. Residues lysine 461 and lysine 467 each participate in a glycyl lysine isopeptide (Lys-Gly) (interchain with G-Cter in SUMO2) cross-link. At serine 468 the chain carries Phosphoserine. Residues lysine 470 and lysine 481 each participate in a glycyl lysine isopeptide (Lys-Gly) (interchain with G-Cter in SUMO2); alternate cross-link. N6-acetyllysine; alternate occurs at positions 470 and 481. Lysine 486 participates in a covalent cross-link: Glycyl lysine isopeptide (Lys-Gly) (interchain with G-Cter in SUMO2). Residues 495–521 (FPERSKKEDRGKRSEGGHRGFVPEKNF) show a composition bias toward basic and acidic residues. Lysine 519 carries the N6-acetyllysine modification. Lysine 527 is covalently cross-linked (Glycyl lysine isopeptide (Lys-Gly) (interchain with G-Cter in SUMO2); alternate). Lysine 527 is subject to N6-acetyllysine; alternate. Position 535 is a phosphoserine (serine 535). The segment covering 540-550 (KTSESRDKLGA) has biased composition (basic and acidic residues). Residue lysine 551 forms a Glycyl lysine isopeptide (Lys-Gly) (interchain with G-Cter in SUMO2) linkage. 552–559 (GDFPTGKS) is an ATP binding site. A Glycyl lysine isopeptide (Lys-Gly) (interchain with G-Cter in SUMO2); alternate cross-link involves residue lysine 558. N6-acetyllysine; alternate is present on lysine 558. Residues serine 560, serine 562, and serine 575 each carry the phosphoserine modification. A Glycyl lysine isopeptide (Lys-Gly) (interchain with G-Cter in SUMO2) cross-link involves residue lysine 602. Phosphoserine occurs at positions 619, 622, 672, 682, and 684. Basic and acidic residues predominate over residues 663 to 680 (EQEAAKNKKSPEIHRRID). Residues 663 to 955 (EQEAAKNKKS…EKDNIQPTTE (293 aa)) are disordered. Residues 691–761 (LAHDEMKSPR…RSAEKTEKTH (71 aa)) show a composition bias toward basic and acidic residues. Residue lysine 697 forms a Glycyl lysine isopeptide (Lys-Gly) (interchain with G-Cter in SUMO2) linkage. Position 698 is a phosphoserine (serine 698). Glycyl lysine isopeptide (Lys-Gly) (interchain with G-Cter in SUMO2) cross-links involve residues lysine 705, lysine 709, lysine 711, lysine 756, and lysine 759. The span at 762–775 (KGSKKQKKHRRARD) shows a compositional bias: basic residues. Residues 779–789 (SSSSSSQSSHS) are compositionally biased toward low complexity. Lysine 811 carries the post-translational modification N6-acetyllysine. Asymmetric dimethylarginine is present on arginine 845. The segment covering 848–859 (YSGNNNNNSNND) has biased composition (low complexity). Threonine 874 bears the Phosphothreonine mark. Residues lysine 876 and lysine 879 each participate in a glycyl lysine isopeptide (Lys-Gly) (interchain with G-Cter in SUMO2) cross-link. Basic and acidic residues predominate over residues 881–895 (YLHDDREGEGSDKWV). 2 positions are modified to phosphoserine: serine 928 and serine 939. Over residues 930–940 (EEGEIEDDESG) the composition is skewed to acidic residues.

Belongs to the BCLAF1/THRAP3 family. As to quaternary structure, associated with the large multiprotein complex TRAP (Mediator complex-like). Interacts with SFPQ; the interaction is dependent on SFPQ phosphorylation at 'Thr-687' and inhibits binding of SFPQ to an ESS1 exonic splicing silencer element-containing RNA. Interacts with NXF1. Component of the SNARP complex which consists at least of SNIP1, SNW1, THRAP3, BCLAF1 and PNN. Associated with spliced mRNP complexes. Interacts with HELZ2 and PPARG. Interacts with CLOCK and BMAL1. Component of a MACOM-like complex, named WTAP complex, composed of WTAP, ZC3H13, CBLL1, KIAA1429, RBM15, BCLAF1 and THRAP3. Post-translationally, ADP-ribosylation during genotoxic stress promotes accumulation in nuclear speckles. In terms of tissue distribution, ubiquitous.

The protein localises to the nucleus. It localises to the nucleoplasm. Its subcellular location is the nucleus speckle. Functionally, involved in pre-mRNA splicing. Remains associated with spliced mRNA after splicing which probably involves interactions with the exon junction complex (EJC). Can trigger mRNA decay which seems to be independent of nonsense-mediated decay involving premature stop codons (PTC) recognition. May be involved in nuclear mRNA decay. Involved in regulation of signal-induced alternative splicing. During splicing of PTPRC/CD45 is proposed to sequester phosphorylated SFPQ from PTPRC/CD45 pre-mRNA in resting T-cells. Involved in cyclin-D1/CCND1 mRNA stability probably by acting as component of the SNARP complex which associates with both the 3'end of the CCND1 gene and its mRNA. Involved in response to DNA damage. Is excluced from DNA damage sites in a manner that parallels transcription inhibition; the function may involve the SNARP complex. Initially thought to play a role in transcriptional coactivation through its association with the TRAP complex; however, it is not regarded as a stable Mediator complex subunit. Cooperatively with HELZ2, enhances the transcriptional activation mediated by PPARG, maybe through the stabilization of the PPARG binding to DNA in presence of ligand. May play a role in the terminal stage of adipocyte differentiation. Plays a role in the positive regulation of the circadian clock. Acts as a coactivator of the CLOCK-BMAL1 heterodimer and promotes its transcriptional activator activity and binding to circadian target genes. This is Thyroid hormone receptor-associated protein 3 from Homo sapiens (Human).